The chain runs to 385 residues: Acetylornithine aminotransferase (385 aa).

Pyridoxal 5'-phosphate-binding positions include 94 to 95 (GT) and Phe126. Arg129 is a binding site for N(2)-acetyl-L-ornithine. A pyridoxal 5'-phosphate-binding site is contributed by 211 to 214 (DEVQ). Lys240 is subject to N6-(pyridoxal phosphate)lysine. Residue Thr267 participates in N(2)-acetyl-L-ornithine binding. Thr268 lines the pyridoxal 5'-phosphate pocket.

It belongs to the class-III pyridoxal-phosphate-dependent aminotransferase family. ArgD subfamily. In terms of assembly, homodimer. Requires pyridoxal 5'-phosphate as cofactor.

It is found in the cytoplasm. The catalysed reaction is N(2)-acetyl-L-ornithine + 2-oxoglutarate = N-acetyl-L-glutamate 5-semialdehyde + L-glutamate. It functions in the pathway amino-acid biosynthesis; L-arginine biosynthesis; N(2)-acetyl-L-ornithine from L-glutamate: step 4/4. In Thermotoga maritima (strain ATCC 43589 / DSM 3109 / JCM 10099 / NBRC 100826 / MSB8), this protein is Acetylornithine aminotransferase.